Consider the following 295-residue polypeptide: Tyrosine recombinase XerD (295 aa).

Residues 1–85 (MDTIIEEYLK…TIRSFHQFAL (85 aa)) form the Core-binding (CB) domain. One can recognise a Tyr recombinase domain in the interval 106–289 (KLPDVLEINE…SKSQIRKMYN (184 aa)). Active-site residues include R146, K170, H241, R244, and H267. Catalysis depends on Y276, which acts as the O-(3'-phospho-DNA)-tyrosine intermediate.

Belongs to the 'phage' integrase family. XerD subfamily. Forms a cyclic heterotetrameric complex composed of two molecules of XerC and two molecules of XerD.

Its subcellular location is the cytoplasm. Site-specific tyrosine recombinase, which acts by catalyzing the cutting and rejoining of the recombining DNA molecules. The XerC-XerD complex is essential to convert dimers of the bacterial chromosome into monomers to permit their segregation at cell division. It also contributes to the segregational stability of plasmids. The sequence is that of Tyrosine recombinase XerD from Staphylococcus saprophyticus subsp. saprophyticus (strain ATCC 15305 / DSM 20229 / NCIMB 8711 / NCTC 7292 / S-41).